A 139-amino-acid chain; its full sequence is Histone H3-like 5 (139 aa).

Residues 1-10 (MARTKQTARI) show a composition bias toward polar residues. Residues 1-43 (MARTKQTARISTGGKAPRKQLAPKAARQSAPATGGVKKPHRFR) form a disordered region. Lysine 5 carries the post-translational modification N6,N6,N6-trimethyllysine; alternate. Position 5 is an N6,N6-dimethyllysine; alternate (lysine 5). At lysine 5 the chain carries N6-methyllysine; alternate. A Phosphoserine modification is found at serine 11. Threonine 12 bears the Phosphothreonine mark. Lysine 15 bears the N6-acetyllysine mark. Residues lysine 19 and lysine 24 each carry the N6-methyllysine; alternate modification. N6-acetyllysine; alternate occurs at positions 19 and 24. At serine 29 the chain carries Phosphoserine. Lysine 37 carries the N6,N6,N6-trimethyllysine; alternate modification. Lysine 37 bears the N6,N6-dimethyllysine; alternate mark. Lysine 37 is subject to N6-methyllysine; alternate.

This sequence belongs to the histone H3 family. The nucleosome is a histone octamer containing two molecules each of H2A, H2B, H3 and H4 assembled in one H3-H4 heterotetramer and two H2A-H2B heterodimers. The octamer wraps approximately 147 bp of DNA.

Its subcellular location is the nucleus. It is found in the chromosome. Its function is as follows. Core component of nucleosome. Nucleosomes wrap and compact DNA into chromatin, limiting DNA accessibility to the cellular machineries which require DNA as a template. Histones thereby play a central role in transcription regulation, DNA repair, DNA replication and chromosomal stability. DNA accessibility is regulated via a complex set of post-translational modifications of histones, also called histone code, and nucleosome remodeling. The protein is Histone H3-like 5 of Arabidopsis thaliana (Mouse-ear cress).